A 371-amino-acid chain; its full sequence is Transcription termination/antitermination protein NusA (371 aa).

The 65-residue stretch at 135-199 (EDIMTGIVQR…KGPQIYVSRT (65 aa)) folds into the S1 motif domain. One can recognise a KH domain in the interval 301–367 (EKATTVIVPD…EPLFTEPETA (67 aa)). The disordered stretch occupies residues 347 to 371 (GIYPRELEEDDEPLFTEPETAESDE). Positions 353 to 371 (LEEDDEPLFTEPETAESDE) are enriched in acidic residues.

The protein belongs to the NusA family. As to quaternary structure, monomer. Binds directly to the core enzyme of the DNA-dependent RNA polymerase and to nascent RNA.

The protein localises to the cytoplasm. Functionally, participates in both transcription termination and antitermination. The polypeptide is Transcription termination/antitermination protein NusA (Bacillus subtilis (strain 168)).